A 422-amino-acid polypeptide reads, in one-letter code: MDYLQIKKSPKLHGEIKISGAKNAALPLIAMSILAKNIVTIKNLPHVADIKTLLKLLSNLGAECSSSWENYSTTINTSTLNQTKATYDIVKTMRASILVLGPILARFGHCEVSLPGGCAIGQRPIDLHLKALEQMGAVINIEAGYIHAIAPDGLKGCNIIFDKITVTGTANIVMAAALAKGVTTITNAAREPEVVQLCEILNASGVKIEGIETAVLTIHGTGGELLEIAPFSVIPDRIEAGTYLCAGAITKSELTLKGANAKHLGAVLSKLEEMGSKFTITDDSITIHPSKIIKHVKIVTQEYPAFPTDMQAQFLALATQADGTSIIEERLFENRFMHVSELQRMGADISLNGNVATVNGHSKLSGTDVMATDLRASSALVLAGLVADGITDVHRIYHLDRGYDSLEKKLQNVGADISRLKE.

22-23 (KN) serves as a coordination point for phosphoenolpyruvate. Arginine 94 contributes to the UDP-N-acetyl-alpha-D-glucosamine binding site. Cysteine 118 acts as the Proton donor in catalysis. Cysteine 118 is subject to 2-(S-cysteinyl)pyruvic acid O-phosphothioketal. UDP-N-acetyl-alpha-D-glucosamine contacts are provided by residues 123–127 (RPIDL), aspartate 309, and leucine 331.

This sequence belongs to the EPSP synthase family. MurA subfamily.

The protein resides in the cytoplasm. It catalyses the reaction phosphoenolpyruvate + UDP-N-acetyl-alpha-D-glucosamine = UDP-N-acetyl-3-O-(1-carboxyvinyl)-alpha-D-glucosamine + phosphate. It functions in the pathway cell wall biogenesis; peptidoglycan biosynthesis. Its function is as follows. Cell wall formation. Adds enolpyruvyl to UDP-N-acetylglucosamine. The chain is UDP-N-acetylglucosamine 1-carboxyvinyltransferase from Sulfurimonas denitrificans (strain ATCC 33889 / DSM 1251) (Thiomicrospira denitrificans (strain ATCC 33889 / DSM 1251)).